A 102-amino-acid polypeptide reads, in one-letter code: RNA-binding protein Hfq (102 aa).

The 60-residue stretch at 9–68 (DPFLNALRRERVPVSIYLVNGIKLQGQIESFDQFVILLKNTVSQMVYKHAISTVVPSRPV) folds into the Sm domain. A disordered region spans residues 63–102 (VPSRPVSHHSNNAGGGASNNYHHGSNVQGSTAQQDSEETE). Residues 70–88 (HHSNNAGGGASNNYHHGSN) are compositionally biased toward low complexity.

The protein belongs to the Hfq family. In terms of assembly, homohexamer.

RNA chaperone that binds small regulatory RNA (sRNAs) and mRNAs to facilitate mRNA translational regulation in response to envelope stress, environmental stress and changes in metabolite concentrations. Also binds with high specificity to tRNAs. The protein is RNA-binding protein Hfq of Salmonella choleraesuis (strain SC-B67).